The following is a 545-amino-acid chain: MRCRTRQRISERSQACVVKVSACSYSVCMATNLDELNAQSAYAPLPPIFAKLGLAYDDVLLLPNETDVIPSEVDTSTHLTRKIVMKAPVLSAAMDTVTESEMAIAMARNGGIGVLHRNLSIDDQAAQVDVVKRSESGMITDPLTVNPEVTLADLDKLCGKFHISGLPVVDKENKLVGIITNRDMRFIASEDYDTLKVKDVMTKENLVTGPSNISKDDAHRLLAQHKVEKLPLVDEEGHLTGLITVKDFVKTEQYPDATKDEQGRLRVAAGVGFLGDAWQRASALMEAGVDVLVVDTANGEARLALDMISRLKHDSAFDGVQIIGGNVGTRSGAQAMIEAGADAVKVGIGPGSICTTRIVAGVGVPQLTAVYEAAQACRAAGVPCIADGGIHYSGDIAKALVAGASSVMLGGTLAGCEEAPGEKVLLHGKQYKLYRGMGSLGAMAPRGKKSYSKDRYFQADVTSSDKVVPEGVEGEVPYRGPLNAVLYQMLGGLHQSMFYIGAHNIAEMPERGKFIRITDAGLRESHPHDIVMTTEAPNYSGFHNN.

CBS domains follow at residues 138–194 and 201–258; these read MITD…DYDT and MTKE…PDAT. NAD(+)-binding positions include D295 and 347-349; that span reads GIG. The K(+) site is built by G349 and G351. S352 provides a ligand contact to IMP. C354 is a binding site for K(+). C354 functions as the Thioimidate intermediate in the catalytic mechanism. Residues 387–389, 410–411, and 434–438 each bind IMP; these read DGG, GG, and YRGMG. R455 acts as the Proton acceptor in catalysis. IMP is bound at residue E470. The K(+) site is built by E524, S525, and H526.

The protein belongs to the IMPDH/GMPR family. As to quaternary structure, homotetramer. The cofactor is K(+).

The enzyme catalyses IMP + NAD(+) + H2O = XMP + NADH + H(+). The protein operates within purine metabolism; XMP biosynthesis via de novo pathway; XMP from IMP: step 1/1. Mycophenolic acid (MPA) is a non-competitive inhibitor that prevents formation of the closed enzyme conformation by binding to the same site as the amobile flap. In contrast, mizoribine monophosphate (MZP) is a competitive inhibitor that induces the closed conformation. MPA is a potent inhibitor of mammalian IMPDHs but a poor inhibitor of the bacterial enzymes. MZP is a more potent inhibitor of bacterial IMPDH. Its function is as follows. Catalyzes the conversion of inosine 5'-phosphate (IMP) to xanthosine 5'-phosphate (XMP), the first committed and rate-limiting step in the de novo synthesis of guanine nucleotides, and therefore plays an important role in the regulation of cell growth. The chain is Inosine-5'-monophosphate dehydrogenase from Bifidobacterium longum (strain NCC 2705).